The following is a 225-amino-acid chain: C-type lectin domain-containing protein 91 (225 aa).

Residues 1-21 (MRSTYILIIVPLIIIGGGVVA) form the signal peptide. Residues 85 to 215 (YSDSCYFIET…CTMAFKSICE (131 aa)) form the C-type lectin domain. 2 disulfides stabilise this stretch: cysteine 106–cysteine 214 and cysteine 185–cysteine 206. Asparagine 217 is a glycosylation site (N-linked (GlcNAc...) asparagine).

It localises to the secreted. The sequence is that of C-type lectin domain-containing protein 91 (clec-91) from Caenorhabditis elegans.